The sequence spans 129 residues: Small ribosomal subunit protein uS8my (129 aa).

Belongs to the universal ribosomal protein uS8 family. As to quaternary structure, component of the mitochondrial ribosome small subunit.

The protein resides in the mitochondrion. The chain is Small ribosomal subunit protein uS8my (RPS15AE) from Arabidopsis thaliana (Mouse-ear cress).